The sequence spans 246 residues: DNA repair protein RecO (246 aa).

The protein belongs to the RecO family.

Functionally, involved in DNA repair and RecF pathway recombination. This chain is DNA repair protein RecO, found in Bifidobacterium adolescentis (strain ATCC 15703 / DSM 20083 / NCTC 11814 / E194a).